A 310-amino-acid chain; its full sequence is Lipoyl synthase (310 aa).

C61, C66, C72, C87, C91, C94, and S300 together coordinate [4Fe-4S] cluster. The region spanning F73–S289 is the Radical SAM core domain.

The protein belongs to the radical SAM superfamily. Lipoyl synthase family. [4Fe-4S] cluster serves as cofactor.

It is found in the cytoplasm. The enzyme catalyses [[Fe-S] cluster scaffold protein carrying a second [4Fe-4S](2+) cluster] + N(6)-octanoyl-L-lysyl-[protein] + 2 oxidized [2Fe-2S]-[ferredoxin] + 2 S-adenosyl-L-methionine + 4 H(+) = [[Fe-S] cluster scaffold protein] + N(6)-[(R)-dihydrolipoyl]-L-lysyl-[protein] + 4 Fe(3+) + 2 hydrogen sulfide + 2 5'-deoxyadenosine + 2 L-methionine + 2 reduced [2Fe-2S]-[ferredoxin]. It participates in protein modification; protein lipoylation via endogenous pathway; protein N(6)-(lipoyl)lysine from octanoyl-[acyl-carrier-protein]: step 2/2. In terms of biological role, catalyzes the radical-mediated insertion of two sulfur atoms into the C-6 and C-8 positions of the octanoyl moiety bound to the lipoyl domains of lipoate-dependent enzymes, thereby converting the octanoylated domains into lipoylated derivatives. The polypeptide is Lipoyl synthase (Buchnera aphidicola subsp. Cinara cedri (strain Cc)).